The sequence spans 380 residues: Carbamoyl phosphate synthase small chain (380 aa).

Positions 1-184 are CPSase; the sequence is MTTSTRGAHR…EAYVVPAIGE (184 aa). Positions 55, 236, and 238 each coordinate L-glutamine. A Glutamine amidotransferase type-1 domain is found at 188-380; it reads TVAAVDLGIK…FVNLMEGQRA (193 aa). Catalysis depends on Cys264, which acts as the Nucleophile. L-glutamine is bound by residues Phe265, Gln268, Asn306, Gly308, and Phe309. Residues His354 and Glu356 contribute to the active site.

The protein belongs to the CarA family. As to quaternary structure, composed of two chains; the small (or glutamine) chain promotes the hydrolysis of glutamine to ammonia, which is used by the large (or ammonia) chain to synthesize carbamoyl phosphate. Tetramer of heterodimers (alpha,beta)4.

It catalyses the reaction hydrogencarbonate + L-glutamine + 2 ATP + H2O = carbamoyl phosphate + L-glutamate + 2 ADP + phosphate + 2 H(+). It carries out the reaction L-glutamine + H2O = L-glutamate + NH4(+). Its pathway is amino-acid biosynthesis; L-arginine biosynthesis; carbamoyl phosphate from bicarbonate: step 1/1. It participates in pyrimidine metabolism; UMP biosynthesis via de novo pathway; (S)-dihydroorotate from bicarbonate: step 1/3. Functionally, small subunit of the glutamine-dependent carbamoyl phosphate synthetase (CPSase). CPSase catalyzes the formation of carbamoyl phosphate from the ammonia moiety of glutamine, carbonate, and phosphate donated by ATP, constituting the first step of 2 biosynthetic pathways, one leading to arginine and/or urea and the other to pyrimidine nucleotides. The small subunit (glutamine amidotransferase) binds and cleaves glutamine to supply the large subunit with the substrate ammonia. This is Carbamoyl phosphate synthase small chain from Streptomyces coelicolor (strain ATCC BAA-471 / A3(2) / M145).